A 152-amino-acid chain; its full sequence is Small integral membrane protein 28 (152 aa).

The chain crosses the membrane as a helical span at residues 52–72 (FLCILLPATILLFLAFLLLFL). Positions 117–152 (PLPPEATLPSQCLPPSYEEATRNPPGEEAQGCSPSV) are disordered.

Its subcellular location is the membrane. The polypeptide is Small integral membrane protein 28 (Homo sapiens (Human)).